Here is a 3344-residue protein sequence, read N- to C-terminus: Genome polyprotein (3344 aa).

One can recognise a Peptidase S30 domain in the interval 408–547 (IVGNSKINYI…RSVYAKMDQY (140 aa)). Residues His456, Asp465, and Ser499 each act as for P1 proteinase activity in the active site. The Involved in interaction with stylet and aphid transmission signature appears at 598-601 (KITC). The short motif at 856 to 858 (PTK) is the Involved in virions binding and aphid transmission element. The 123-residue stretch at 882-1004 (MYIAKKGYCY…DSEMKHYIVG (123 aa)) folds into the Peptidase C6 domain. Catalysis depends on for helper component proteinase activity residues Cys890 and His963. In terms of domain architecture, Helicase ATP-binding spans 1473 to 1625 (EIAHSPEREF…TQFPTKIVTE (153 aa)). 1486-1493 (GAVGSGKS) contributes to the ATP binding site. Residues 1575–1578 (DECH) carry the DECH box motif. In terms of domain architecture, Helicase C-terminal spans 1644-1803 (DVTAFADNIL…GLPVMTHNVG (160 aa)). The Nuclear localization signal motif lies at 2134–2141 (KKGNKKGK). Tyr2156 is subject to O-(5'-phospho-RNA)-tyrosine. The region spanning 2283 to 2499 (GKSLCQGMRN…LSWGALKVWE (217 aa)) is the Peptidase C4 domain. Residues His2327, Asp2362, and Cys2431 each act as for nuclear inclusion protein A activity in the active site. One can recognise a RdRp catalytic domain in the interval 2761–2885 (WVYCDADGSQ…AIHPDHEHVL (125 aa)). Residues 3059–3093 (KNEAVDAGLNEKLKEKEKQKEKEKEKQKEKEKDGA) show a composition bias toward basic and acidic residues. A disordered region spans residues 3059 to 3116 (KNEAVDAGLNEKLKEKEKQKEKEKEKQKEKEKDGASDGNDVSTSTKTGERDRDVNVGT).

This sequence belongs to the potyviridae genome polyprotein family. In terms of assembly, interacts with host eIF4E protein (via cap-binding region); this interaction mediates the translation of the VPg-viral RNA conjugates. Part of a complex that comprises VPg, RNA, host EIF4E and EIF4G; this interaction mediates the translation of the VPg-viral RNA conjugates. VPg is uridylylated by the polymerase and is covalently attached to the 5'-end of the genomic RNA. This uridylylated form acts as a nucleotide-peptide primer for the polymerase. In terms of processing, potyviral RNA is expressed as two polyproteins which undergo post-translational proteolytic processing. Genome polyprotein is processed by NIa-pro, P1 and HC-pro proteinases resulting in the production of at least ten individual proteins. P3N-PIPO polyprotein is cleaved by P1 and HC-pro proteinases resulting in the production of three individual proteins. The P1 proteinase and the HC-pro cleave only their respective C-termini autocatalytically. 6K1 is essential for proper proteolytic separation of P3 from CI.

The protein resides in the host cytoplasmic vesicle. The protein localises to the host nucleus. It is found in the virion. The enzyme catalyses RNA(n) + a ribonucleoside 5'-triphosphate = RNA(n+1) + diphosphate. The catalysed reaction is Hydrolyzes glutaminyl bonds, and activity is further restricted by preferences for the amino acids in P6 - P1' that vary with the species of potyvirus, e.g. Glu-Xaa-Xaa-Tyr-Xaa-Gln-|-(Ser or Gly) for the enzyme from tobacco etch virus. The natural substrate is the viral polyprotein, but other proteins and oligopeptides containing the appropriate consensus sequence are also cleaved.. It carries out the reaction Hydrolyzes a Gly-|-Gly bond at its own C-terminus, commonly in the sequence -Tyr-Xaa-Val-Gly-|-Gly, in the processing of the potyviral polyprotein.. Functionally, required for aphid transmission and also has proteolytic activity. Only cleaves a Gly-Gly dipeptide at its own C-terminus. Interacts with virions and aphid stylets. Acts as a suppressor of RNA-mediated gene silencing, also known as post-transcriptional gene silencing (PTGS), a mechanism of plant viral defense that limits the accumulation of viral RNAs. May have RNA-binding activity. Its function is as follows. Has helicase activity. It may be involved in replication. Indispensable for virus replication. In terms of biological role, mediates the cap-independent, EIF4E-dependent translation of viral genomic RNAs. Binds to the cap-binding site of host EIF4E and thus interferes with the host EIF4E-dependent mRNA export and translation. VPg-RNA directly binds EIF4E and is a template for transcription. Also forms trimeric complexes with EIF4E-EIF4G, which are templates for translation. Functionally, has RNA-binding and proteolytic activities. Its function is as follows. An RNA-dependent RNA polymerase that plays an essential role in the virus replication. Involved in aphid transmission, cell-to-cell and systemis movement, encapsidation of the viral RNA and in the regulation of viral RNA amplification. In Carica papaya (Papaya), this protein is Genome polyprotein.